Reading from the N-terminus, the 358-residue chain is Methylthioribose-1-phosphate isomerase (358 aa).

Residues 54–56 (RGA), R96, and Q205 each bind substrate. D246 acts as the Proton donor in catalysis. A substrate-binding site is contributed by 256–257 (SK).

The protein belongs to the eIF-2B alpha/beta/delta subunits family. MtnA subfamily.

The catalysed reaction is 5-(methylsulfanyl)-alpha-D-ribose 1-phosphate = 5-(methylsulfanyl)-D-ribulose 1-phosphate. Its pathway is amino-acid biosynthesis; L-methionine biosynthesis via salvage pathway; L-methionine from S-methyl-5-thio-alpha-D-ribose 1-phosphate: step 1/6. In terms of biological role, catalyzes the interconversion of methylthioribose-1-phosphate (MTR-1-P) into methylthioribulose-1-phosphate (MTRu-1-P). This is Methylthioribose-1-phosphate isomerase from Pseudomonas putida (strain GB-1).